Here is a 349-residue protein sequence, read N- to C-terminus: Dihydroorotate dehydrogenase (quinone) (349 aa).

Residues P59–K63 and T83 each bind FMN. Position 63 (K63) interacts with substrate. N108–F112 is a substrate binding site. FMN contacts are provided by N142 and N173. N173 contacts substrate. S176 acts as the Nucleophile in catalysis. A substrate-binding site is contributed by N178. Residues K212 and S240 each coordinate FMN. Residue N241 to T242 coordinates substrate. Residues G262, G291, and Y312 to S313 contribute to the FMN site.

This sequence belongs to the dihydroorotate dehydrogenase family. Type 2 subfamily. Monomer. FMN serves as cofactor.

Its subcellular location is the cell membrane. It catalyses the reaction (S)-dihydroorotate + a quinone = orotate + a quinol. The protein operates within pyrimidine metabolism; UMP biosynthesis via de novo pathway; orotate from (S)-dihydroorotate (quinone route): step 1/1. In terms of biological role, catalyzes the conversion of dihydroorotate to orotate with quinone as electron acceptor. This Novosphingobium aromaticivorans (strain ATCC 700278 / DSM 12444 / CCUG 56034 / CIP 105152 / NBRC 16084 / F199) protein is Dihydroorotate dehydrogenase (quinone).